The chain runs to 226 residues: uncharacterized protein (226 aa).

Positions E71–S207 constitute an RNase H type-1 domain.

This is an uncharacterized protein from Bacillus subtilis (strain 168).